A 379-amino-acid polypeptide reads, in one-letter code: 23S rRNA (uracil(747)-C(5))-methyltransferase RlmC (379 aa).

[4Fe-4S] cluster is bound by residues Cys3, Cys11, Cys14, and Cys86. Gln211, Phe240, Glu262, and Asn310 together coordinate S-adenosyl-L-methionine. The active-site Nucleophile is Cys337.

This sequence belongs to the class I-like SAM-binding methyltransferase superfamily. RNA M5U methyltransferase family. RlmC subfamily.

The enzyme catalyses uridine(747) in 23S rRNA + S-adenosyl-L-methionine = 5-methyluridine(747) in 23S rRNA + S-adenosyl-L-homocysteine + H(+). Catalyzes the formation of 5-methyl-uridine at position 747 (m5U747) in 23S rRNA. This Halothiobacillus neapolitanus (strain ATCC 23641 / c2) (Thiobacillus neapolitanus) protein is 23S rRNA (uracil(747)-C(5))-methyltransferase RlmC.